Here is a 228-residue protein sequence, read N- to C-terminus: 7-cyano-7-deazaguanine synthase (228 aa).

10 to 20 (FSGGQDSTTLA) provides a ligand contact to ATP. 4 residues coordinate Zn(2+): Cys-190, Cys-205, Cys-208, and Cys-211.

Belongs to the QueC family. Requires Zn(2+) as cofactor.

It carries out the reaction 7-carboxy-7-deazaguanine + NH4(+) + ATP = 7-cyano-7-deazaguanine + ADP + phosphate + H2O + H(+). Its pathway is purine metabolism; 7-cyano-7-deazaguanine biosynthesis. In terms of biological role, catalyzes the ATP-dependent conversion of 7-carboxy-7-deazaguanine (CDG) to 7-cyano-7-deazaguanine (preQ(0)). This chain is 7-cyano-7-deazaguanine synthase, found in Helicobacter pylori (strain P12).